The following is a 134-amino-acid chain: Replication enhancer protein (134 aa).

Belongs to the geminiviridae replication enhancer protein family. In terms of assembly, homooligomer. Interacts with the replication-associated protein (REP). Interacts with host proliferating cell nuclear antigen (PCNA). Interacts with host retinoblastoma-related protein 1 (RBR1), and may thereby deregulate the host cell cycle. Oligomerization and interaction with PCNA are necessary for optimal replication enhancement.

In terms of biological role, increases viral DNA accumulation. Enhances infectivity and symptom expression. This Solanum lycopersicum (Tomato) protein is Replication enhancer protein.